The primary structure comprises 70 residues: ATP synthase subunit c (70 aa).

A run of 2 helical transmembrane segments spans residues Ile4–Ile24 and Phe47–Val67.

The protein belongs to the ATPase C chain family. In terms of assembly, F-type ATPases have 2 components, F(1) - the catalytic core - and F(0) - the membrane proton channel. F(1) has five subunits: alpha(3), beta(3), gamma(1), delta(1), epsilon(1). F(0) has three main subunits: a(1), b(2) and c(10-14). The alpha and beta chains form an alternating ring which encloses part of the gamma chain. F(1) is attached to F(0) by a central stalk formed by the gamma and epsilon chains, while a peripheral stalk is formed by the delta and b chains.

The protein resides in the cell membrane. F(1)F(0) ATP synthase produces ATP from ADP in the presence of a proton or sodium gradient. F-type ATPases consist of two structural domains, F(1) containing the extramembraneous catalytic core and F(0) containing the membrane proton channel, linked together by a central stalk and a peripheral stalk. During catalysis, ATP synthesis in the catalytic domain of F(1) is coupled via a rotary mechanism of the central stalk subunits to proton translocation. Its function is as follows. Key component of the F(0) channel; it plays a direct role in translocation across the membrane. A homomeric c-ring of between 10-14 subunits forms the central stalk rotor element with the F(1) delta and epsilon subunits. The protein is ATP synthase subunit c of Priestia megaterium (strain ATCC 12872 / QMB1551) (Bacillus megaterium).